The primary structure comprises 27 residues: GFGSFLGKALKAGLKLGANLLGGAPQQ.

Expressed by the skin glands.

It localises to the secreted. Antimicrobial peptide. This Xenopus ruwenzoriensis (Uganda clawed frog) protein is Caerulein precursor fragment R1.